Consider the following 297-residue polypeptide: Homoserine kinase (297 aa).

Position 84–94 (84–94 (PLSKGFGSSAA)) interacts with ATP.

This sequence belongs to the GHMP kinase family. Homoserine kinase subfamily.

It is found in the cytoplasm. It catalyses the reaction L-homoserine + ATP = O-phospho-L-homoserine + ADP + H(+). Its pathway is amino-acid biosynthesis; L-threonine biosynthesis; L-threonine from L-aspartate: step 4/5. Its function is as follows. Catalyzes the ATP-dependent phosphorylation of L-homoserine to L-homoserine phosphate. The polypeptide is Homoserine kinase (Shouchella clausii (strain KSM-K16) (Alkalihalobacillus clausii)).